Consider the following 780-residue polypeptide: Gelsolin (780 aa).

At M1 the chain carries N-acetylmethionine; alternate. A signal peptide spans 1-25 (MAPYRSSLLCALLLLALCALSPSHA). The actin-severing stretch occupies residues 51-174 (VVEHPEFLKA…YKKGGVASGF (124 aa)). The stretch at 74–155 (FDLVPVPPNL…EVQGFESSTF (82 aa)) is one Gelsolin-like 1 repeat. Residue Y84 is modified to Phosphotyrosine. Residues G90, D91, E122, D134, G139, and A141 each contribute to the Ca(2+) site. An actin-actin interfilament contact point region spans residues 121–124 (DESG). 160-167 (KSGLKYKK) contacts a 1,2-diacyl-sn-glycero-3-phospho-(1D-myo-inositol-4,5-bisphosphate). V170 contacts Ca(2+). A 1,2-diacyl-sn-glycero-3-phospho-(1D-myo-inositol-4,5-bisphosphate) is bound at residue 186–194 (RLFQVKGRR). A Gelsolin-like 2 repeat occupies 196–268 (VRATEVPVSW…SEEGGEPEAM (73 aa)). The Ca(2+) site is built by G211 and D212. Residues C213 and C226 are joined by a disulfide bond. E234 lines the Ca(2+) pocket. A disordered region spans residues 244 to 269 (GIRDNERSGRAQVHVSEEGGEPEAML). Positions 284, 327, 328, and 352 each coordinate Ca(2+). Residues 315–387 (DENPFAQGAL…LPEGGETPLF (73 aa)) form a Gelsolin-like 3 repeat. 2 positions are modified to phosphotyrosine: Y407 and Y463. Positions 432–780 (AAQHGMDDDG…LDRALAELAA (349 aa)) are actin-binding, Ca-sensitive. The Gelsolin-like 4 repeat unit spans residues 453-534 (SNKVPVDPAT…VQGKEPAHLM (82 aa)). Ca(2+)-binding residues include G469, D470, E500, D512, G517, P519, and T549. The stretch at 575-640 (RAVEVMPKSG…EEGSEPDAFW (66 aa)) is one Gelsolin-like 5 repeat. An N6-acetyllysine modification is found at K582. 2 residues coordinate Ca(2+): N589 and D590. Y601 carries the post-translational modification Phosphotyrosine. E612 contributes to the Ca(2+) binding site. Y649 carries the post-translational modification Phosphotyrosine. The stretch at 679 to 754 (IEEVPGELMQ…VRQGFEPPSF (76 aa)) is one Gelsolin-like 6 repeat. Ca(2+)-binding residues include D694, D695, and E717. T740 carries the phosphothreonine modification.

This sequence belongs to the villin/gelsolin family. In terms of assembly, binds to actin and to fibronectin. Identified in a complex composed of ACTA1, COBL, GSN and TMSB4X. Interacts with the inactive form of EIF2AK2/PKR. Interacts with FLII. Post-translationally, phosphorylated on tyrosine residues in vitro.

The protein localises to the cytoplasm. It localises to the cytoskeleton. Its subcellular location is the secreted. Calcium-regulated, actin-modulating protein that binds to the plus (or barbed) ends of actin monomers or filaments, preventing monomer exchange (end-blocking or capping). It can promote the assembly of monomers into filaments (nucleation) as well as sever filaments already formed. Plays a role in ciliogenesis. The sequence is that of Gelsolin (Gsn) from Mus musculus (Mouse).